Consider the following 126-residue polypeptide: Acidic phospholipase A2 3 (126 aa).

A propeptide spanning residues 1–7 (SNRPMPL) is cleaved from the precursor. Cystine bridges form between Cys-18–Cys-78, Cys-33–Cys-125, Cys-35–Cys-51, Cys-50–Cys-106, Cys-57–Cys-99, Cys-67–Cys-92, and Cys-85–Cys-97. The Ca(2+) site is built by Tyr-34, Gly-36, and Gly-38. His-54 is an active-site residue. Asp-55 lines the Ca(2+) pocket. Asp-100 is a catalytic residue.

It belongs to the phospholipase A2 family. Group I subfamily. D49 sub-subfamily. Ca(2+) is required as a cofactor. As to expression, expressed by the venom gland.

Its subcellular location is the secreted. It carries out the reaction a 1,2-diacyl-sn-glycero-3-phosphocholine + H2O = a 1-acyl-sn-glycero-3-phosphocholine + a fatty acid + H(+). In terms of biological role, PLA2 catalyzes the calcium-dependent hydrolysis of the 2-acyl groups in 3-sn-phosphoglycerides. The chain is Acidic phospholipase A2 3 from Naja sagittifera (Andaman cobra).